A 263-amino-acid polypeptide reads, in one-letter code: MDYWFAEIVTIGNEVLSGKTVNTNASHIGRRLTSLGFTVRRITVVMDDIDEIVSAFREAIDRKPKVIVSSGGLGPTWDDKTAEGLAKALGVNLELNKTAFDMILEKYTKRNIPLTEERKKMAYLPYGAMAVENNEGIAPGIYIYHNNIDILATPGVPREMENVLENFINKMLRNKPNLKYLEDFIYVENVMESALAPYVKELVKKYDIYIKTHPKSYELLRPILEIQIAGSGREEEIKVKIEKVKNELLDAIKKLNGIIRNSL.

It belongs to the CinA family.

The sequence is that of Protein M1425_2021 from Saccharolobus islandicus (strain M.14.25 / Kamchatka #1) (Sulfolobus islandicus).